The sequence spans 129 residues: Small ribosomal subunit protein uS8 (129 aa).

Belongs to the universal ribosomal protein uS8 family. In terms of assembly, part of the 30S ribosomal subunit.

One of the primary rRNA binding proteins, it binds directly to 16S rRNA central domain where it helps coordinate assembly of the platform of the 30S subunit. This is Small ribosomal subunit protein uS8 from Thermofilum pendens (strain DSM 2475 / Hrk 5).